Here is a 285-residue protein sequence, read N- to C-terminus: Vacuolar protein sorting-associated protein 37B (285 aa).

The tract at residues 50–170 (ASNRSLAEGN…EMVLKGQRLP (121 aa)) is interaction with IST1. The VPS37 C-terminal domain occupies 84–173 (FEAYQIKKTK…LKGQRLPQAL (90 aa)). Residues 175–201 (PLPPRLPELAPTAPLPYPAPEASGPPA) form a disordered region. Arg-218 carries the omega-N-methylarginine modification. A disordered region spans residues 230 to 285 (GQAVPYPGLQCPPLPPRVGLPTQQGFSSQFVSPYPPPLPQRPPPRLPPHQPGFILQ). The span at 250–260 (PTQQGFSSQFV) shows a compositional bias: polar residues. The segment covering 262-279 (PYPPPLPQRPPPRLPPHQ) has biased composition (pro residues).

Belongs to the VPS37 family. Component of the ESCRT-I complex (endosomal sorting complex required for transport I) which consists of TSG101, VPS28, a VPS37 protein (VPS37A to -D) and MVB12A or MVB12B in a 1:1:1:1 stoichiometry. Interacts with TSG101, VPS28, MVB12A and MVB12B. Component of the ESCRT-I complex (endosomal sorting complex required for transport I) which consists of TSG101, VPS28, a VPS37 protein (VPS37A to -D) and UBAP1 in a 1:1:1:1 stoichiometry. Interacts with CEP55. Interacts with IST1. Widely expressed. Expressed in macrophages and lymphocytes.

It localises to the late endosome membrane. Functionally, component of the ESCRT-I complex, a regulator of vesicular trafficking process. Required for the sorting of endocytic ubiquitinated cargos into multivesicular bodies. May be involved in cell growth and differentiation. The sequence is that of Vacuolar protein sorting-associated protein 37B (VPS37B) from Homo sapiens (Human).